Consider the following 305-residue polypeptide: Catechol 1,2-dioxygenase (305 aa).

Residues Tyr-163, Tyr-197, His-221, and His-223 each coordinate Fe cation.

The protein belongs to the intradiol ring-cleavage dioxygenase family. As to quaternary structure, homodimer. Requires Fe(3+) as cofactor.

It catalyses the reaction catechol + O2 = cis,cis-muconate + 2 H(+). It participates in aromatic compound metabolism; beta-ketoadipate pathway; 5-oxo-4,5-dihydro-2-furylacetate from catechol: step 1/3. This is Catechol 1,2-dioxygenase (catA) from Acinetobacter guillouiae (Acinetobacter genomosp. 11).